We begin with the raw amino-acid sequence, 127 residues long: Small ribosomal subunit protein bS6 (127 aa).

A disordered region spans residues 101 to 127; that stretch reads PMMKEEKARDLLQGAKADAPAEQPAAA. The span at 115–127 shows a compositional bias: low complexity; it reads AKADAPAEQPAAA.

Belongs to the bacterial ribosomal protein bS6 family.

Its function is as follows. Binds together with bS18 to 16S ribosomal RNA. This is Small ribosomal subunit protein bS6 from Thiobacillus denitrificans (strain ATCC 25259 / T1).